Consider the following 170-residue polypeptide: Peptide deformylase 2 (170 aa).

The Fe cation site is built by Cys94 and His136. Residue Glu137 is part of the active site. His140 contacts Fe cation.

This sequence belongs to the polypeptide deformylase family. It depends on Fe(2+) as a cofactor.

It carries out the reaction N-terminal N-formyl-L-methionyl-[peptide] + H2O = N-terminal L-methionyl-[peptide] + formate. Functionally, removes the formyl group from the N-terminal Met of newly synthesized proteins. Requires at least a dipeptide for an efficient rate of reaction. N-terminal L-methionine is a prerequisite for activity but the enzyme has broad specificity at other positions. In Xanthomonas campestris pv. campestris (strain ATCC 33913 / DSM 3586 / NCPPB 528 / LMG 568 / P 25), this protein is Peptide deformylase 2.